Consider the following 255-residue polypeptide: Zinc import ATP-binding protein ZnuC (255 aa).

In terms of domain architecture, ABC transporter spans 4-219 (VDVDGLSLRY…PEYRALFGTG (216 aa)). 36–43 (GPNGSGKT) lines the ATP pocket. The interval 234 to 255 (EHDHHDGCAHGQATEDRTEAAE) is disordered.

It belongs to the ABC transporter superfamily. Zinc importer (TC 3.A.1.15.5) family. As to quaternary structure, the complex is composed of two ATP-binding proteins (ZnuC), two transmembrane proteins (ZnuB) and a solute-binding protein (ZnuA).

It is found in the cell inner membrane. It catalyses the reaction Zn(2+)(out) + ATP(in) + H2O(in) = Zn(2+)(in) + ADP(in) + phosphate(in) + H(+)(in). In terms of biological role, part of the ABC transporter complex ZnuABC involved in zinc import. Responsible for energy coupling to the transport system. In Roseobacter denitrificans (strain ATCC 33942 / OCh 114) (Erythrobacter sp. (strain OCh 114)), this protein is Zinc import ATP-binding protein ZnuC.